Consider the following 522-residue polypeptide: Glucose-6-phosphate isomerase (522 aa).

Glu-351 (proton donor) is an active-site residue. Active-site residues include His-382 and Lys-491.

It belongs to the GPI family.

The protein localises to the cytoplasm. The enzyme catalyses alpha-D-glucose 6-phosphate = beta-D-fructose 6-phosphate. The protein operates within carbohydrate biosynthesis; gluconeogenesis. It participates in carbohydrate degradation; glycolysis; D-glyceraldehyde 3-phosphate and glycerone phosphate from D-glucose: step 2/4. In terms of biological role, catalyzes the reversible isomerization of glucose-6-phosphate to fructose-6-phosphate. In Albidiferax ferrireducens (strain ATCC BAA-621 / DSM 15236 / T118) (Rhodoferax ferrireducens), this protein is Glucose-6-phosphate isomerase.